The sequence spans 267 residues: Dynein axonemal assembly factor 19 homolog (267 aa).

Disordered stretches follow at residues 86–111 (ISQS…RDWR) and 226–250 (HQGK…VDPC).

This sequence belongs to the DNAAF19/PR46b family. Homodimer.

The protein localises to the cytoplasm. Its subcellular location is the cell projection. It localises to the cilium. It is found in the flagellum. Dynein-attachment factor required for cilia motility. In Chlamydomonas reinhardtii (Chlamydomonas smithii), this protein is Dynein axonemal assembly factor 19 homolog (PR46b).